Here is a 348-residue protein sequence, read N- to C-terminus: [FeFe] hydrogenase maturase subunit HydE (348 aa).

The region spanning 49 to 268 (DEVHIRAIIE…LLPDSNIPAT (220 aa)) is the Radical SAM core domain. [4Fe-4S] cluster-binding residues include cysteine 63, cysteine 67, and cysteine 70. [2Fe-2S] cluster is bound by residues cysteine 311, cysteine 319, and cysteine 322.

Belongs to the radical SAM superfamily. HydE family. As to quaternary structure, monomer. [4Fe-4S] cluster serves as cofactor. [2Fe-2S] cluster is required as a cofactor.

In terms of biological role, required for the maturation of the [FeFe]-hydrogenase HydA. Catalyzes the reductive cleavage of S-adenosyl-L-methionine (in vitro), suggesting it may contribute to the biosynthesis of an essential sulfur-containing ligand that binds to the hydrogenase active site [2Fe-2S] cluster. The polypeptide is [FeFe] hydrogenase maturase subunit HydE (Thermotoga maritima (strain ATCC 43589 / DSM 3109 / JCM 10099 / NBRC 100826 / MSB8)).